The sequence spans 296 residues: Stanniocalcin-2 (296 aa).

The signal sequence occupies residues 1–24; the sequence is MCAERLGQFVTLALVFATLDPAQG. Residues 21–44 form a disordered region; that stretch reads PAQGTDSTNPPEGPQDRSSQQKGR. The span at 24–44 shows a compositional bias: polar residues; it reads GTDSTNPPEGPQDRSSQQKGR. N-linked (GlcNAc...) asparagine glycosylation occurs at Asn73. The disordered stretch occupies residues 218–296; it reads PPTAAPEHQP…EQSEYSDIRR (79 aa). Residues 240–258 are compositionally biased toward basic and acidic residues; that stretch reads RDTDHHLTANRGAKGERGS. The segment covering 272–282 has biased composition (low complexity); sequence GQSAQGPSGSS.

The protein belongs to the stanniocalcin family. As to quaternary structure, homodimer; disulfide-linked. As to expression, found in a variety of tissues including skeletal muscle, small intestine, kidney, liver and brain.

It localises to the secreted. Its function is as follows. Has an anti-hypocalcemic action on calcium and phosphate homeostasis. The chain is Stanniocalcin-2 (Stc2) from Mus musculus (Mouse).